The sequence spans 381 residues: Creatine kinase M-type (381 aa).

Residues 11–98 (KLNYKPQEEY…FDPIIQDRHG (88 aa)) form the Phosphagen kinase N-terminal domain. Positions 125-367 (YVLSSRVRTG…KLMVEMEKKL (243 aa)) constitute a Phosphagen kinase C-terminal domain. Residue 128-132 (SSRVR) participates in ATP binding. The residue at position 164 (Ser-164) is a Phosphoserine. At Thr-166 the chain carries Phosphothreonine. Ser-178 carries the post-translational modification Phosphoserine. Position 180 is a phosphothreonine (Thr-180). His-191 contributes to the ATP binding site. Ser-199 carries the post-translational modification Phosphoserine. Arg-236 and Arg-292 together coordinate ATP. Phosphothreonine is present on residues Thr-313 and Thr-322. ATP contacts are provided by residues 320–325 (RGTGGV) and Asp-335. Phosphoserine is present on Ser-372.

It belongs to the ATP:guanido phosphotransferase family. Dimer of identical or non-identical chains, which can be either B (brain type) or M (muscle type). With MM being the major form in skeletal muscle and myocardium, MB existing in myocardium, and BB existing in many tissues, especially brain.

It localises to the cytoplasm. It catalyses the reaction creatine + ATP = N-phosphocreatine + ADP + H(+). In terms of biological role, reversibly catalyzes the transfer of phosphate between ATP and various phosphogens (e.g. creatine phosphate). Creatine kinase isoenzymes play a central role in energy transduction in tissues with large, fluctuating energy demands, such as skeletal muscle, heart, brain and spermatozoa. The sequence is that of Creatine kinase M-type (Ckm) from Mus musculus (Mouse).